The chain runs to 545 residues: Chaperonin GroEL (545 aa).

ATP-binding positions include 30–33 (TLGP), Lys51, 87–91 (DGTTT), Gly415, and Asp495.

The protein belongs to the chaperonin (HSP60) family. In terms of assembly, forms a cylinder of 14 subunits composed of two heptameric rings stacked back-to-back. Interacts with the co-chaperonin GroES.

Its subcellular location is the cytoplasm. The enzyme catalyses ATP + H2O + a folded polypeptide = ADP + phosphate + an unfolded polypeptide.. In terms of biological role, together with its co-chaperonin GroES, plays an essential role in assisting protein folding. The GroEL-GroES system forms a nano-cage that allows encapsulation of the non-native substrate proteins and provides a physical environment optimized to promote and accelerate protein folding. This Shewanella sp. (strain W3-18-1) protein is Chaperonin GroEL.